A 390-amino-acid chain; its full sequence is Succinyl-diaminopimelate desuccinylase (390 aa).

H74 contributes to the Zn(2+) binding site. Residue D76 is part of the active site. D107 is a Zn(2+) binding site. E140 functions as the Proton acceptor in the catalytic mechanism. Zn(2+)-binding residues include E141, E169, and H363.

Belongs to the peptidase M20A family. DapE subfamily. As to quaternary structure, homodimer. Requires Zn(2+) as cofactor. Co(2+) serves as cofactor.

It catalyses the reaction N-succinyl-(2S,6S)-2,6-diaminopimelate + H2O = (2S,6S)-2,6-diaminopimelate + succinate. Its pathway is amino-acid biosynthesis; L-lysine biosynthesis via DAP pathway; LL-2,6-diaminopimelate from (S)-tetrahydrodipicolinate (succinylase route): step 3/3. In terms of biological role, catalyzes the hydrolysis of N-succinyl-L,L-diaminopimelic acid (SDAP), forming succinate and LL-2,6-diaminopimelate (DAP), an intermediate involved in the bacterial biosynthesis of lysine and meso-diaminopimelic acid, an essential component of bacterial cell walls. This is Succinyl-diaminopimelate desuccinylase from Bartonella bacilliformis (strain ATCC 35685 / KC583 / Herrer 020/F12,63).